Reading from the N-terminus, the 570-residue chain is CRISPR-associated protein Cas8a1/Csx13 (570 aa).

2 disordered regions span residues 1–23 and 551–570; these read MACM…AGLR and GGEA…SEQS.

This sequence belongs to the CRISPR-associated protein Cas8a1/Csx13 family. Myxan subtype subfamily.

Functionally, CRISPR (clustered regularly interspaced short palindromic repeat) is an adaptive immune system that provides protection against mobile genetic elements (viruses, transposable elements and conjugative plasmids). CRISPR clusters contain spacers, sequences complementary to antecedent mobile elements, and target invading nucleic acids. CRISPR clusters are transcribed and processed into CRISPR RNA (crRNA). Functions in an unknown fashion to stimulate transcription of fruA independently of the intracellular A- and E-developmental signals. The sequence is that of CRISPR-associated protein Cas8a1/Csx13 (devT) from Myxococcus xanthus (strain DK1622).